Consider the following 179-residue polypeptide: Large ribosomal subunit protein uL5 (179 aa).

The protein belongs to the universal ribosomal protein uL5 family. As to quaternary structure, part of the 50S ribosomal subunit; part of the 5S rRNA/L5/L18/L25 subcomplex. Contacts the 5S rRNA and the P site tRNA. Forms a bridge to the 30S subunit in the 70S ribosome.

Functionally, this is one of the proteins that bind and probably mediate the attachment of the 5S RNA into the large ribosomal subunit, where it forms part of the central protuberance. In the 70S ribosome it contacts protein S13 of the 30S subunit (bridge B1b), connecting the 2 subunits; this bridge is implicated in subunit movement. Contacts the P site tRNA; the 5S rRNA and some of its associated proteins might help stabilize positioning of ribosome-bound tRNAs. The protein is Large ribosomal subunit protein uL5 of Halothermothrix orenii (strain H 168 / OCM 544 / DSM 9562).